A 227-amino-acid polypeptide reads, in one-letter code: 2-C-methyl-D-erythritol 4-phosphate cytidylyltransferase (227 aa).

Belongs to the IspD/TarI cytidylyltransferase family. IspD subfamily.

The enzyme catalyses 2-C-methyl-D-erythritol 4-phosphate + CTP + H(+) = 4-CDP-2-C-methyl-D-erythritol + diphosphate. Its pathway is isoprenoid biosynthesis; isopentenyl diphosphate biosynthesis via DXP pathway; isopentenyl diphosphate from 1-deoxy-D-xylulose 5-phosphate: step 2/6. In terms of biological role, catalyzes the formation of 4-diphosphocytidyl-2-C-methyl-D-erythritol from CTP and 2-C-methyl-D-erythritol 4-phosphate (MEP). The chain is 2-C-methyl-D-erythritol 4-phosphate cytidylyltransferase from Dehalococcoides mccartyi (strain ATCC BAA-2266 / KCTC 15142 / 195) (Dehalococcoides ethenogenes (strain 195)).